The chain runs to 356 residues: GDSL esterase/lipase At5g37690 (356 aa).

An N-terminal signal peptide occupies residues 1–18 (MMILRLALAIVISTYATA). Serine 34 acts as the Nucleophile in catalysis. Asparagine 116 and asparagine 291 each carry an N-linked (GlcNAc...) asparagine glycan. Catalysis depends on residues aspartate 322 and histidine 325.

It belongs to the 'GDSL' lipolytic enzyme family.

The protein localises to the secreted. The chain is GDSL esterase/lipase At5g37690 from Arabidopsis thaliana (Mouse-ear cress).